Here is a 39-residue protein sequence, read N- to C-terminus: Cytochrome b559 subunit beta (39 aa).

A helical membrane pass occupies residues 14–30 (WLAIHGLAVPTVFSLGS). Position 18 (His18) interacts with heme.

Belongs to the PsbE/PsbF family. Heterodimer of an alpha subunit and a beta subunit. PSII is composed of 1 copy each of membrane proteins PsbA, PsbB, PsbC, PsbD, PsbE, PsbF, PsbH, PsbI, PsbJ, PsbK, PsbL, PsbM, PsbT, PsbX, PsbY, PsbZ, Psb30/Ycf12, at least 3 peripheral proteins of the oxygen-evolving complex and a large number of cofactors. It forms dimeric complexes. Requires heme b as cofactor.

The protein resides in the plastid. Its subcellular location is the chloroplast thylakoid membrane. Functionally, this b-type cytochrome is tightly associated with the reaction center of photosystem II (PSII). PSII is a light-driven water:plastoquinone oxidoreductase that uses light energy to abstract electrons from H(2)O, generating O(2) and a proton gradient subsequently used for ATP formation. It consists of a core antenna complex that captures photons, and an electron transfer chain that converts photonic excitation into a charge separation. This chain is Cytochrome b559 subunit beta, found in Huperzia lucidula (Shining clubmoss).